The sequence spans 467 residues: Matrix metalloproteinase-18 (467 aa).

Positions 1-17 (MNSLLLKLLLCVAITAA) are cleaved as a signal peptide. Positions 18-99 (FPADKQDEPP…PRCGVYDVGQ (82 aa)) are excised as a propeptide. The short motif at 90–97 (PRCGVYDV) is the Cysteine switch element. Zn(2+) is bound by residues Cys92 and His218. Residue Glu219 is part of the active site. Zn(2+) is bound by residues His222 and His228. Hemopexin repeat units lie at residues 277 to 326 (PSRC…WPSL), 327 to 373 (PTNI…GFPK), 375 to 423 (VKRI…FPGI), and 424 to 467 (PDKI…WLGC). An intrachain disulfide couples Cys280 to Cys467.

The protein belongs to the peptidase M10A family. Zn(2+) is required as a cofactor. The cofactor is Ca(2+). Expressed only transiently in whole animal, at time when tadpole feeding begins.

The protein localises to the secreted. Its subcellular location is the extracellular space. It localises to the extracellular matrix. With respect to regulation, up-regulated in the tail by thyroid hormone. Cleaves collagen type I. May play a role in larval tissue degeneration and adult organogenesis during amphibian metamorphosis. May be involved in tail resorption. The protein is Matrix metalloproteinase-18 (mmp18) of Xenopus laevis (African clawed frog).